A 572-amino-acid chain; its full sequence is Oxygen-dependent choline dehydrogenase (572 aa).

Residue 7–36 (DYIIIGAGSAGNVLATRLTEDRDVTVLLLE) participates in FAD binding. The Proton acceptor role is filled by histidine 474.

This sequence belongs to the GMC oxidoreductase family. FAD serves as cofactor.

The catalysed reaction is choline + A = betaine aldehyde + AH2. The enzyme catalyses betaine aldehyde + NAD(+) + H2O = glycine betaine + NADH + 2 H(+). Its pathway is amine and polyamine biosynthesis; betaine biosynthesis via choline pathway; betaine aldehyde from choline (cytochrome c reductase route): step 1/1. Involved in the biosynthesis of the osmoprotectant glycine betaine. Catalyzes the oxidation of choline to betaine aldehyde and betaine aldehyde to glycine betaine at the same rate. This is Oxygen-dependent choline dehydrogenase from Paraburkholderia phymatum (strain DSM 17167 / CIP 108236 / LMG 21445 / STM815) (Burkholderia phymatum).